The sequence spans 106 residues: Nucleoid-associated protein Rpal_0620 (106 aa).

It belongs to the YbaB/EbfC family. In terms of assembly, homodimer.

The protein resides in the cytoplasm. The protein localises to the nucleoid. In terms of biological role, binds to DNA and alters its conformation. May be involved in regulation of gene expression, nucleoid organization and DNA protection. In Rhodopseudomonas palustris (strain TIE-1), this protein is Nucleoid-associated protein Rpal_0620.